The sequence spans 103 residues: uncharacterized protein (103 aa).

This is an uncharacterized protein from Mycoplasma pneumoniae (strain ATCC 29342 / M129 / Subtype 1) (Mycoplasmoides pneumoniae).